A 113-amino-acid chain; its full sequence is Nucleoid-associated protein Synpcc7942_0464 (113 aa).

It belongs to the YbaB/EbfC family. As to quaternary structure, homodimer.

It localises to the cytoplasm. The protein localises to the nucleoid. In terms of biological role, binds to DNA and alters its conformation. May be involved in regulation of gene expression, nucleoid organization and DNA protection. The sequence is that of Nucleoid-associated protein Synpcc7942_0464 from Synechococcus elongatus (strain ATCC 33912 / PCC 7942 / FACHB-805) (Anacystis nidulans R2).